Here is a 373-residue protein sequence, read N- to C-terminus: 3 beta-hydroxysteroid dehydrogenase/Delta 5--&gt;4-isomerase type 2 (373 aa).

The active-site Proton acceptor is tyrosine 155. Residue lysine 159 participates in NAD(+) binding. The chain crosses the membrane as a helical span at residues 288–308 (VPLLYWLAFLLETVSFLLSPI).

The protein belongs to the 3-beta-HSD family. As to expression, liver and kidney.

The protein resides in the endoplasmic reticulum membrane. It is found in the mitochondrion membrane. It carries out the reaction a 3beta-hydroxy-Delta(5)-steroid + NAD(+) = a 3-oxo-Delta(5)-steroid + NADH + H(+). The enzyme catalyses a 3-oxo-Delta(5)-steroid = a 3-oxo-Delta(4)-steroid. It catalyses the reaction pregnenolone + NAD(+) = pregn-5-ene-3,20-dione + NADH + H(+). The catalysed reaction is pregn-5-ene-3,20-dione = progesterone. It carries out the reaction 3beta-hydroxyandrost-5-en-17-one + NAD(+) = androst-5-ene-3,17-dione + NADH + H(+). The enzyme catalyses androst-5-ene-3,17-dione = androst-4-ene-3,17-dione. It functions in the pathway lipid metabolism; steroid biosynthesis. In terms of biological role, 3-beta-HSD is a bifunctional enzyme, that catalyzes the oxidative conversion of Delta(5)-ene-3-beta-hydroxy steroid, and the oxidative conversion of ketosteroids. The 3-beta-HSD enzymatic system plays a crucial role in the biosynthesis of all classes of hormonal steroids. This is 3 beta-hydroxysteroid dehydrogenase/Delta 5--&gt;4-isomerase type 2 from Mus musculus (Mouse).